We begin with the raw amino-acid sequence, 243 residues long: UPF0758 protein AM1_4368 (243 aa).

Residues 113 to 235 (VIDDPAVAAA…FTSLRQTTSL (123 aa)) enclose the MPN domain. Residues H184, H186, and D197 each contribute to the Zn(2+) site. A JAMM motif motif is present at residues 184–197 (HNHPSGQTDPSPED).

The protein belongs to the UPF0758 family.

The protein is UPF0758 protein AM1_4368 of Acaryochloris marina (strain MBIC 11017).